The following is a 215-amino-acid chain: Cytochrome b6 (215 aa).

The helical transmembrane segment at 32–52 threads the bilayer; sequence IFYCLGGITLVCFLIQFATGF. Cys35 serves as a coordination point for heme c. Heme b contacts are provided by His86 and His100. Transmembrane regions (helical) follow at residues 90–110, 116–136, and 186–206; these read ASMMVLMMILHVFRVYLTGGF, LTWVSGVILAVITVSFGVTGY, and AHTFVLPWLIAVFMLFHFLMI. Residues His187 and His202 each coordinate heme b.

It belongs to the cytochrome b family. PetB subfamily. As to quaternary structure, the 4 large subunits of the cytochrome b6-f complex are cytochrome b6, subunit IV (17 kDa polypeptide, PetD), cytochrome f and the Rieske protein, while the 4 small subunits are PetG, PetL, PetM and PetN. The complex functions as a dimer. Heme b serves as cofactor. It depends on heme c as a cofactor.

Its subcellular location is the cellular thylakoid membrane. Component of the cytochrome b6-f complex, which mediates electron transfer between photosystem II (PSII) and photosystem I (PSI), cyclic electron flow around PSI, and state transitions. The protein is Cytochrome b6 of Trichormus variabilis (strain ATCC 29413 / PCC 7937) (Anabaena variabilis).